A 916-amino-acid polypeptide reads, in one-letter code: Inter-alpha-trypsin inhibitor heavy chain H4 (916 aa).

A signal peptide spans 1-27 (MKTPAPGRIHSIVLVLLSLAVLQTSKA). The 122-residue stretch at 28-149 (QKVQNDIDIY…KVTFELVYEE (122 aa)) folds into the VIT domain. 2 N-linked (GlcNAc...) asparagine glycosylation sites follow: Asn-82 and Asn-208. The region spanning 275–458 (NVIFVIDKSG…LQLQDFYQEV (184 aa)) is the VWFA domain. Asn-518 is a glycosylation site (N-linked (GlcNAc...) asparagine). Disordered regions lie at residues 597 to 616 (PEGQ…ESRG) and 678 to 701 (PLAP…TDFR). The span at 678–689 (PLAPASAPSPTS) shows a compositional bias: low complexity. O-linked (GalNAc...) serine glycosylation occurs at Ser-683. Residues Thr-705, Thr-706, and Thr-708 are each glycosylated (O-linked (GalNAc...) threonine). The cysteines at positions 733 and 911 are disulfide-linked.

It belongs to the ITIH family. As to quaternary structure, interacts (via C-terminus) with DNAJC1 (via SANT 2 domain). Appears to be both N- and O-glycosylated.

Its subcellular location is the secreted. Its function is as follows. Type II acute-phase protein (APP) involved in inflammatory responses to trauma. May also play a role in liver development or regeneration. The polypeptide is Inter-alpha-trypsin inhibitor heavy chain H4 (ITIH4) (Bos taurus (Bovine)).